The chain runs to 465 residues: Glutathione reductase (465 aa).

FAD is bound by residues S16 and G17. S16 lines the glutathione pocket. R23 serves as a coordination point for glutathione. FAD contacts are provided by E42, T49, C50, and K58. Cysteines 50 and 55 form a disulfide. Y108 contributes to the glutathione binding site. G124 is an FAD binding site. 6 residues coordinate NADP(+): A187, I190, E193, R210, R216, and G276. An FAD-binding site is contributed by D318. Position 324 (L324) interacts with NADP(+). T326 serves as a coordination point for FAD. R334 lines the glutathione pocket. V357 is an NADP(+) binding site. Position 454 (H454) interacts with FAD. The active-site Proton acceptor is the H454.

Belongs to the class-I pyridine nucleotide-disulfide oxidoreductase family. The cofactor is FAD.

The protein localises to the cytoplasm. The catalysed reaction is 2 glutathione + NADP(+) = glutathione disulfide + NADPH + H(+). Its function is as follows. Catalyzes the reduction of glutathione disulfide (GSSG) to reduced glutathione (GSH). Constitutes the major mechanism to maintain a high GSH:GSSG ratio in the cytosol. The amount of GSH may affect the determination of cell fate. The protein is Glutathione reductase (gsr) of Dictyostelium discoideum (Social amoeba).